A 456-amino-acid polypeptide reads, in one-letter code: SWI/SNF complex component SNF12 homolog (456 aa).

The SWIB/MDM2 domain occupies 234–310; that stretch reads HVPQKYKVLG…PQLLREHLSP (77 aa). The tract at residues 435–456 is disordered; sequence KQTTPNPTPQQISMAPSTPQTP.

This sequence belongs to the SMARCD family. Part of a SWI-SNF complex.

Its subcellular location is the nucleus. Its function is as follows. Involved in transcriptional activation and repression of select genes by chromatin remodeling (alteration of DNA-nucleosome topology). The chain is SWI/SNF complex component SNF12 homolog (snf12-1) from Dictyostelium discoideum (Social amoeba).